A 160-amino-acid polypeptide reads, in one-letter code: Anaerobic nitrite reductase HBII (160 aa).

Residues glycine 8 to lysine 157 enclose the Globin domain. Residues glutamate 41–serine 45 carry the Homodimerization motif. Heme b contacts are provided by serine 51, lysine 65, histidine 69, lysine 99, serine 103, and histidine 104. The Homodimerization signature appears at aspartate 111 to glutamate 123.

The protein belongs to the plant globin family. In terms of assembly, homodimer. Requires heme b as cofactor.

The protein localises to the cytoplasm. It is found in the nucleus. The catalysed reaction is Fe(III)-heme b-[protein] + nitric oxide + H2O = Fe(II)-heme b-[protein] + nitrite + 2 H(+). Functionally, phytoglobin that reduces nitrite to nitric oxide (NO) under anoxic conditions (e.g. during flooding or in waterlogged soil) and upon root nodulation. Required for general plant development and during nodulation, especially for the onset of symbiosis. Monitors nitric oxide (NO) levels during early phase of the nitrogen-fixing symbiosis and buffers oxygen in functioning nodules. May not function as an oxygen storage or transport protein. Has an unusually high affinity for O(2) through a hexacoordinate heme iron because of a very low dissociation constant. This chain is Anaerobic nitrite reductase HBII, found in Casuarina glauca (Swamp oak).